The following is a 335-amino-acid chain: Methionine import ATP-binding protein MetN 1 (335 aa).

In terms of domain architecture, ABC transporter spans isoleucine 2–valine 242. Glycine 38 to serine 45 provides a ligand contact to ATP.

It belongs to the ABC transporter superfamily. Methionine importer (TC 3.A.1.24) family. As to quaternary structure, the complex is composed of two ATP-binding proteins (MetN), two transmembrane proteins (MetI) and a solute-binding protein (MetQ).

It localises to the cell inner membrane. The enzyme catalyses L-methionine(out) + ATP + H2O = L-methionine(in) + ADP + phosphate + H(+). It catalyses the reaction D-methionine(out) + ATP + H2O = D-methionine(in) + ADP + phosphate + H(+). In terms of biological role, part of the ABC transporter complex MetNIQ involved in methionine import. Responsible for energy coupling to the transport system. This Pseudomonas savastanoi pv. phaseolicola (strain 1448A / Race 6) (Pseudomonas syringae pv. phaseolicola (strain 1448A / Race 6)) protein is Methionine import ATP-binding protein MetN 1.